We begin with the raw amino-acid sequence, 53 residues long: Conotoxin Vc5.3 (53 aa).

An N-terminal signal peptide occupies residues 1–15 (VILLLLTASAPSVDA). A propeptide spanning residues 16 to 41 (RPKTEDVPLSSFRDNTKSTLQRLLKR) is cleaved from the precursor.

The protein belongs to the conotoxin T superfamily. Post-translationally, contains 2 disulfide bonds that can be either 'C1-C3, C2-C4' or 'C1-C4, C2-C3', since these disulfide connectivities have been observed for conotoxins with cysteine framework V (for examples, see AC P0DQQ7 and AC P81755). As to expression, expressed by the venom duct.

The protein resides in the secreted. This Conus victoriae (Queen Victoria cone) protein is Conotoxin Vc5.3.